A 553-amino-acid polypeptide reads, in one-letter code: Cysteine desulfurase IscS (553 aa).

Over residues 102-122 (NNISSNNTQYNNNSSNSGSLN) the composition is skewed to low complexity. A disordered region spans residues 102 to 125 (NNISSNNTQYNNNSSNSGSLNDEG).

This sequence belongs to the class-V pyridoxal-phosphate-dependent aminotransferase family. NifS/IscS subfamily. As to quaternary structure, homotetramer. Interacts with Isd11; the interaction enhances cysteine desulfurase activity of IscS. Interacts with IscU. Component of a complex, at least composed of IscS, Isd11 and IscU. Pyridoxal 5'-phosphate is required as a cofactor.

It is found in the mitochondrion. It carries out the reaction (sulfur carrier)-H + L-cysteine = (sulfur carrier)-SH + L-alanine. The protein operates within cofactor biosynthesis; iron-sulfur cluster biosynthesis. Catalyzes sulfur activation and mobilization in iron-sulfur cluster formation (ISC) pathway for iron-sulfur (Fe-S) cluster biogenesis. Active when in complex with a partner protein Isd11. The polypeptide is Cysteine desulfurase IscS (Plasmodium falciparum (isolate 3D7)).